The following is a 301-amino-acid chain: Probable 5-dehydro-4-deoxyglucarate dehydratase (301 aa).

This sequence belongs to the DapA family.

The enzyme catalyses 5-dehydro-4-deoxy-D-glucarate + H(+) = 2,5-dioxopentanoate + CO2 + H2O. It participates in carbohydrate acid metabolism; D-glucarate degradation; 2,5-dioxopentanoate from D-glucarate: step 2/2. This chain is Probable 5-dehydro-4-deoxyglucarate dehydratase, found in Cereibacter sphaeroides (strain ATCC 17029 / ATH 2.4.9) (Rhodobacter sphaeroides).